The following is a 178-amino-acid chain: MHSSALLCCLVFLTGVRASPGQGTQSENSCTHFPGSLPHMLRELRVAFGRVKTFFQKKDQLDSMLLKESLLEDFKGYLGCQALSEMIQFYLEEVMPQAENHDPDIKEHVNSLGEKLKTFRLRLRRCHRFLPCENKSKAVAQVKNAVSKLQEKGVYKAMSEFDIFIDYIEAYMTMKTQN.

The first 18 residues, 1 to 18, serve as a signal peptide directing secretion; that stretch reads MHSSALLCCLVFLTGVRA. 2 disulfides stabilise this stretch: Cys30–Cys126 and Cys80–Cys132. Asn134 is a glycosylation site (N-linked (GlcNAc...) asparagine).

It belongs to the IL-10 family. In terms of assembly, homodimer. Interacts with IL10RA and IL10RB.

The protein resides in the secreted. Its function is as follows. Major immune regulatory cytokine that acts on many cells of the immune system where it has profound anti-inflammatory functions, limiting excessive tissue disruption caused by inflammation. Mechanistically, IL10 binds to its heterotetrameric receptor comprising IL10RA and IL10RB leading to JAK1 and STAT2-mediated phosphorylation of STAT3. In turn, STAT3 translocates to the nucleus where it drives expression of anti-inflammatory mediators. Targets antigen-presenting cells (APCs) such as macrophages and monocytes and inhibits their release of pro-inflammatory cytokines including granulocyte-macrophage colony-stimulating factor /GM-CSF, granulocyte colony-stimulating factor/G-CSF, IL-1 alpha, IL-1 beta, IL-6, IL-8 and TNF-alpha. Also interferes with antigen presentation by reducing the expression of MHC-class II and co-stimulatory molecules, thereby inhibiting their ability to induce T cell activation. In addition, controls the inflammatory response of macrophages by reprogramming essential metabolic pathways including mTOR signaling. This Saimiri sciureus (Common squirrel monkey) protein is Interleukin-10 (IL10).